The following is a 412-amino-acid chain: Serine hydroxymethyltransferase (412 aa).

(6S)-5,6,7,8-tetrahydrofolate-binding positions include Leu-120 and 124-126 (GHL). Lys-228 is subject to N6-(pyridoxal phosphate)lysine. 353–355 (SPF) contacts (6S)-5,6,7,8-tetrahydrofolate.

This sequence belongs to the SHMT family. As to quaternary structure, homodimer. It depends on pyridoxal 5'-phosphate as a cofactor.

It localises to the cytoplasm. The enzyme catalyses (6R)-5,10-methylene-5,6,7,8-tetrahydrofolate + glycine + H2O = (6S)-5,6,7,8-tetrahydrofolate + L-serine. It participates in one-carbon metabolism; tetrahydrofolate interconversion. It functions in the pathway amino-acid biosynthesis; glycine biosynthesis; glycine from L-serine: step 1/1. Functionally, catalyzes the reversible interconversion of serine and glycine with tetrahydrofolate (THF) serving as the one-carbon carrier. This reaction serves as the major source of one-carbon groups required for the biosynthesis of purines, thymidylate, methionine, and other important biomolecules. Also exhibits THF-independent aldolase activity toward beta-hydroxyamino acids, producing glycine and aldehydes, via a retro-aldol mechanism. This Lachnoclostridium phytofermentans (strain ATCC 700394 / DSM 18823 / ISDg) (Clostridium phytofermentans) protein is Serine hydroxymethyltransferase.